A 552-amino-acid chain; its full sequence is Phosphoglucomutase (552 aa).

Ser135 functions as the Phosphoserine intermediate in the catalytic mechanism. Mg(2+)-binding residues include Ser135, Asp289, Asp291, and Asp293.

This sequence belongs to the phosphohexose mutase family. It depends on Mg(2+) as a cofactor.

It catalyses the reaction alpha-D-glucose 1-phosphate = alpha-D-glucose 6-phosphate. The protein operates within glycolipid metabolism; diglucosyl-diacylglycerol biosynthesis. In terms of biological role, catalyzes the interconversion between glucose-6-phosphate and alpha-glucose-1-phosphate. This is the first step in the biosynthesis of diglucosyl-diacylglycerol (Glc2-DAG), i.e. a glycolipid found in the membrane, which is also used as a membrane anchor for lipoteichoic acid (LTA). This chain is Phosphoglucomutase (pgcA), found in Staphylococcus saprophyticus subsp. saprophyticus (strain ATCC 15305 / DSM 20229 / NCIMB 8711 / NCTC 7292 / S-41).